The primary structure comprises 692 residues: Methionine--tRNA ligase (692 aa).

A 'HIGH' region motif is present at residues 26–36 (PYANGSIHLGH). Positions 157, 160, 170, and 173 each coordinate Zn(2+). The 'KMSKS' region signature appears at 342 to 346 (KMSKS). K345 is an ATP binding site. A tRNA-binding domain is found at 590–692 (DFAKVDLRIA…SGAQPGMRVK (103 aa)).

The protein belongs to the class-I aminoacyl-tRNA synthetase family. MetG type 1 subfamily. Homodimer. Zn(2+) serves as cofactor.

It localises to the cytoplasm. It carries out the reaction tRNA(Met) + L-methionine + ATP = L-methionyl-tRNA(Met) + AMP + diphosphate. Is required not only for elongation of protein synthesis but also for the initiation of all mRNA translation through initiator tRNA(fMet) aminoacylation. This chain is Methionine--tRNA ligase, found in Methylobacillus flagellatus (strain ATCC 51484 / DSM 6875 / VKM B-1610 / KT).